The following is an 89-amino-acid chain: Protein S100-A8 (89 aa).

EF-hand domains follow at residues 13-48 (IDVY…FVQN) and 46-81 (VQNI…VGVA). Zn(2+) contacts are provided by His17 and His27. Asp33 is a Ca(2+) binding site. S-nitrosocysteine is present on Cys42. Residues Asp59, Asn61, Asp63, and Glu70 each coordinate Ca(2+). Residue His83 coordinates Zn(2+).

Belongs to the S-100 family. In terms of assembly, homodimer. Preferentially exists as a heterodimer or heterotetramer with S100A9 known as calprotectin (S100A8/A9). Calprotectin (S100A8/9) interacts with CEACAM3 and tubulin filaments in a calcium-dependent manner. Heterotetrameric calprotectin (S100A8/A9) interacts with ANXA6 and associates with tubulin filaments in activated monocytes. S100A8 and calprotectin (S100A8/9) interact with NCF2/P67PHOX, RAC1 and RAC2. Calprotectin (S100A8/9) interacts with CYBA and CYBB. S100A8 interacts with AGER, ATP2A2 and with the heterodimeric complex formed by TLR4 and LY96. Calprotectin (S100A8/9) interacts with NOS2 to form the iNOS-S100A8/A9 transnitrosylase complex. Calprotectin (S100A8/9) interacts with CD69.

Its subcellular location is the secreted. The protein resides in the cytoplasm. It is found in the cytoskeleton. It localises to the cell membrane. With respect to regulation, calprotectin (S100A8/A9) activity on TLR4 signaling is inhibited by paquinimod. Its function is as follows. S100A8 is a calcium- and zinc-binding protein which plays a prominent role in the regulation of inflammatory processes and immune response. It can induce neutrophil chemotaxis and adhesion. Predominantly found as calprotectin (S100A8/A9) which has a wide plethora of intra- and extracellular functions. The intracellular functions include: facilitating leukocyte arachidonic acid trafficking and metabolism, modulation of the tubulin-dependent cytoskeleton during migration of phagocytes and activation of the neutrophilic NADPH-oxidase. Also participates in regulatory T-cell differentiation together with CD69. Activates NADPH-oxidase by facilitating the enzyme complex assembly at the cell membrane, transferring arachidonic acid, an essential cofactor, to the enzyme complex and S100A8 contributes to the enzyme assembly by directly binding to NCF2/P67PHOX. The extracellular functions involve pro-inflammatory, antimicrobial, oxidant-scavenging and apoptosis-inducing activities. Its pro-inflammatory activity includes recruitment of leukocytes, promotion of cytokine and chemokine production, and regulation of leukocyte adhesion and migration. Acts as an alarmin or a danger associated molecular pattern (DAMP) molecule and stimulates innate immune cells via binding to pattern recognition receptors such as Toll-like receptor 4 (TLR4) and receptor for advanced glycation endproducts (AGER). Binding to TLR4 and AGER activates the MAP-kinase and NF-kappa-B signaling pathways resulting in the amplification of the pro-inflammatory cascade. Has antimicrobial activity towards bacteria and fungi and exerts its antimicrobial activity probably via chelation of Zn(2+) which is essential for microbial growth. Can induce cell death via autophagy and apoptosis and this occurs through the cross-talk of mitochondria and lysosomes via reactive oxygen species (ROS) and the process involves BNIP3. Can regulate neutrophil number and apoptosis by an anti-apoptotic effect; regulates cell survival via ITGAM/ITGB and TLR4 and a signaling mechanism involving MEK-ERK. Its role as an oxidant scavenger has a protective role in preventing exaggerated tissue damage by scavenging oxidants. The iNOS-S100A8/A9 transnitrosylase complex is proposed to direct selective inflammatory stimulus-dependent S-nitrosylation of multiple targets such as GAPDH, ANXA5, EZR, MSN and VIM by recognizing a [IL]-x-C-x-x-[DE] motif; S100A8 seems to contribute to S-nitrosylation site selectivity. In terms of biological role, (Microbial infection) Upon infection by murine coronavirus (MHV-A59), induces expansion of aberrant immature neutrophils in a TLR4-dependent manner. The protein is Protein S100-A8 of Mus musculus (Mouse).